Here is a 161-residue protein sequence, read N- to C-terminus: 3-hydroxyacyl-[acyl-carrier-protein] dehydratase FabZ (161 aa).

His55 is an active-site residue.

Belongs to the thioester dehydratase family. FabZ subfamily.

The protein localises to the cytoplasm. The catalysed reaction is a (3R)-hydroxyacyl-[ACP] = a (2E)-enoyl-[ACP] + H2O. Functionally, involved in unsaturated fatty acids biosynthesis. Catalyzes the dehydration of short chain beta-hydroxyacyl-ACPs and long chain saturated and unsaturated beta-hydroxyacyl-ACPs. The polypeptide is 3-hydroxyacyl-[acyl-carrier-protein] dehydratase FabZ (Jannaschia sp. (strain CCS1)).